We begin with the raw amino-acid sequence, 735 residues long: MKPCNNIAITPELIAQHGLKNDEYQHILTLIGREPTFTELGIFSAMWNEHCSYKSSKKWLKTLPTKGNCVIQGPGENAGVVDIGEGQCVVFKMESHNHPSYIEPYQGAATGVGGILRDVFTMGARPIAAMNALRFGSPDHPRTRYLVAGVVSGIGGYSNAFGVPTVGGEINFDERYNGNILVNAFVAGIAKKDSIFYSKAQGVGLPVVYLGAKTGRDGVGGATMASAEFDDSISEKRPTVQVGDPFTEKCLLEACLELMELGAVVAIQDMGAAGLTSSAVEMGAKGDLGIKLNLDKVPVREENMTAYEMMLSESQERMLMVLKPELEKQASAIFHKWGLHFSIIGQTTDDLRFRVLHQGEEVVNLPIKELGNEAPVYDRPWSEPTPQPILKVEEVKKVENLGDVLLTLLNSAHQSSRRWVYEQYDTLIQGNTLVRPGADAGVIRVSSNDKRALAFSSDVTPRYCEADPYEGGKQAVAECWRNISTTGAMPLAATDNLNFGNPEKPEIMGQLVLAIKGIGEACRVLDFPIVSGNVSLYNETNGEAILPTPTIAGVGLLDDWSKMVTISGMQNGDSIVLIGDCGSHLGQSIYARNVLNINTGAPPHVDLQLEKKHGQFVRDVIHRGFVHAAHDISDGGLAIALAEMVIKAKKGIKAKLSNRLPHHAELFGEDQGRYLLSIKPYVLNHLKELAQVNAVSLTEIGRVEGNSLNIEGILTLSVDKLTQAYESWFPQFMGE.

His-50 is an active-site residue. ATP-binding residues include Tyr-53 and Lys-92. Glu-94 contacts Mg(2+). Residues 95 to 98 (SHNH) and Arg-117 contribute to the substrate site. Catalysis depends on His-96, which acts as the Proton acceptor. Asp-118 provides a ligand contact to Mg(2+). Residue Gln-241 coordinates substrate. Asp-269 is a Mg(2+) binding site. 313 to 315 (ESQ) contributes to the substrate binding site. Asp-495 and Gly-532 together coordinate ATP. Asn-533 contacts Mg(2+). Ser-535 lines the substrate pocket.

Belongs to the FGAMS family. Monomer. Part of the FGAM synthase complex composed of 1 PurL, 1 PurQ and 2 PurS subunits.

The protein resides in the cytoplasm. It carries out the reaction N(2)-formyl-N(1)-(5-phospho-beta-D-ribosyl)glycinamide + L-glutamine + ATP + H2O = 2-formamido-N(1)-(5-O-phospho-beta-D-ribosyl)acetamidine + L-glutamate + ADP + phosphate + H(+). It participates in purine metabolism; IMP biosynthesis via de novo pathway; 5-amino-1-(5-phospho-D-ribosyl)imidazole from N(2)-formyl-N(1)-(5-phospho-D-ribosyl)glycinamide: step 1/2. Part of the phosphoribosylformylglycinamidine synthase complex involved in the purines biosynthetic pathway. Catalyzes the ATP-dependent conversion of formylglycinamide ribonucleotide (FGAR) and glutamine to yield formylglycinamidine ribonucleotide (FGAM) and glutamate. The FGAM synthase complex is composed of three subunits. PurQ produces an ammonia molecule by converting glutamine to glutamate. PurL transfers the ammonia molecule to FGAR to form FGAM in an ATP-dependent manner. PurS interacts with PurQ and PurL and is thought to assist in the transfer of the ammonia molecule from PurQ to PurL. This is Phosphoribosylformylglycinamidine synthase subunit PurL from Bartonella henselae (strain ATCC 49882 / DSM 28221 / CCUG 30454 / Houston 1) (Rochalimaea henselae).